Reading from the N-terminus, the 335-residue chain is 4-hydroxy-3-methylbut-2-enyl diphosphate reductase (335 aa).

Cysteine 21 lines the [4Fe-4S] cluster pocket. Residues histidine 50 and histidine 86 each coordinate (2E)-4-hydroxy-3-methylbut-2-enyl diphosphate. Histidine 50 and histidine 86 together coordinate dimethylallyl diphosphate. 2 residues coordinate isopentenyl diphosphate: histidine 50 and histidine 86. Cysteine 108 contributes to the [4Fe-4S] cluster binding site. Histidine 136 lines the (2E)-4-hydroxy-3-methylbut-2-enyl diphosphate pocket. Histidine 136 provides a ligand contact to dimethylallyl diphosphate. Residue histidine 136 coordinates isopentenyl diphosphate. Glutamate 138 functions as the Proton donor in the catalytic mechanism. Residue threonine 177 coordinates (2E)-4-hydroxy-3-methylbut-2-enyl diphosphate. Position 207 (cysteine 207) interacts with [4Fe-4S] cluster. (2E)-4-hydroxy-3-methylbut-2-enyl diphosphate is bound by residues serine 235, serine 236, asparagine 237, and serine 280. Serine 235, serine 236, asparagine 237, and serine 280 together coordinate dimethylallyl diphosphate. Positions 235, 236, 237, and 280 each coordinate isopentenyl diphosphate.

This sequence belongs to the IspH family. [4Fe-4S] cluster is required as a cofactor.

It carries out the reaction isopentenyl diphosphate + 2 oxidized [2Fe-2S]-[ferredoxin] + H2O = (2E)-4-hydroxy-3-methylbut-2-enyl diphosphate + 2 reduced [2Fe-2S]-[ferredoxin] + 2 H(+). The catalysed reaction is dimethylallyl diphosphate + 2 oxidized [2Fe-2S]-[ferredoxin] + H2O = (2E)-4-hydroxy-3-methylbut-2-enyl diphosphate + 2 reduced [2Fe-2S]-[ferredoxin] + 2 H(+). It functions in the pathway isoprenoid biosynthesis; dimethylallyl diphosphate biosynthesis; dimethylallyl diphosphate from (2E)-4-hydroxy-3-methylbutenyl diphosphate: step 1/1. The protein operates within isoprenoid biosynthesis; isopentenyl diphosphate biosynthesis via DXP pathway; isopentenyl diphosphate from 1-deoxy-D-xylulose 5-phosphate: step 6/6. Functionally, catalyzes the conversion of 1-hydroxy-2-methyl-2-(E)-butenyl 4-diphosphate (HMBPP) into a mixture of isopentenyl diphosphate (IPP) and dimethylallyl diphosphate (DMAPP). Acts in the terminal step of the DOXP/MEP pathway for isoprenoid precursor biosynthesis. This chain is 4-hydroxy-3-methylbut-2-enyl diphosphate reductase, found in Rhizobium rhizogenes (strain K84 / ATCC BAA-868) (Agrobacterium radiobacter).